Reading from the N-terminus, the 102-residue chain is Small ribosomal subunit protein bS18c (102 aa).

Belongs to the bacterial ribosomal protein bS18 family. As to quaternary structure, part of the 30S ribosomal subunit.

It localises to the plastid. It is found in the chloroplast. This is Small ribosomal subunit protein bS18c from Phaseolus vulgaris (Kidney bean).